The following is a 465-amino-acid chain: Hepatocyte nuclear factor 6 (465 aa).

4 disordered regions span residues 17-55 (SHEP…SMGM), 120-141 (DKFP…HQRL), 264-290 (LLGT…GQME), and 442-465 (DKWQ…CTKA). Over residues 123-140 (PHHHHHHHHHHHPHHHQR) the composition is skewed to basic residues. A compositionally biased stretch (polar residues) spans 273–288 (PSVTGAQVSNGSNSGQ). A DNA-binding region (CUT) is located at residues 283 to 369 (GSNSGQMEEI…QRMSALRLAA (87 aa)). The segment at residues 385–444 (PKKPRLVFTDVQRRTLHAIFKENKRPSKELQITISQQLGLELSTVSNFFMNARRRSLDKW) is a DNA-binding region (homeobox). Positions 448–465 (GSSNSGNSSSSSSTCTKA) are enriched in low complexity.

This sequence belongs to the CUT homeobox family. Binds DNA as a monomer. Highly expressed in liver; lower expression in testis and skin.

It is found in the nucleus. Functionally, transcriptional activator. Binds the consensus sequence 5'-DHWATTGAYTWWD-3' on a variety of gene promoters such as those of HNF3B and TTR. Important for liver genes transcription. The protein is Hepatocyte nuclear factor 6 (ONECUT1) of Homo sapiens (Human).